A 494-amino-acid polypeptide reads, in one-letter code: Alpha-amylase-related protein (494 aa).

Residues 1-20 (MFKFASAVILCLVAASSTQA) form the signal peptide. At Gln21 the chain carries Pyrrolidone carboxylic acid. Cys48 and Cys104 are joined by a disulfide. Ca(2+) is bound by residues Asn118, Gln169, and Asp178. A disulfide bridge connects residues Cys157 and Cys171. Chloride is bound at residue Arg206. Asp208 acts as the Nucleophile in catalysis. His212 is a binding site for Ca(2+). The active-site Proton donor is the Glu245. Chloride contacts are provided by Asn308 and Arg343. 3 disulfide bridges follow: Cys376/Cys382, Cys418/Cys441, and Cys448/Cys460.

This sequence belongs to the glycosyl hydrolase 13 family. Monomer. It depends on Ca(2+) as a cofactor. Chloride serves as cofactor.

It localises to the secreted. It catalyses the reaction Endohydrolysis of (1-&gt;4)-alpha-D-glucosidic linkages in polysaccharides containing three or more (1-&gt;4)-alpha-linked D-glucose units.. This chain is Alpha-amylase-related protein (Amyrel), found in Drosophila ercepeae (Fruit fly).